We begin with the raw amino-acid sequence, 243 residues long: Carboxy-S-adenosyl-L-methionine synthase (243 aa).

S-adenosyl-L-methionine contacts are provided by residues Tyr40, 65–67 (GCS), 90–91 (DN), 118–119 (DI), Asn133, and Arg200.

The protein belongs to the class I-like SAM-binding methyltransferase superfamily. Cx-SAM synthase family. In terms of assembly, homodimer.

It carries out the reaction prephenate + S-adenosyl-L-methionine = carboxy-S-adenosyl-L-methionine + 3-phenylpyruvate + H2O. Catalyzes the conversion of S-adenosyl-L-methionine (SAM) to carboxy-S-adenosyl-L-methionine (Cx-SAM). This is Carboxy-S-adenosyl-L-methionine synthase from Shewanella sp. (strain W3-18-1).